A 472-amino-acid polypeptide reads, in one-letter code: GTPase HflX (472 aa).

A disordered region spans residues 1–21; that stretch reads MDTIDTPGEQGSQSFGNSLGA. The region spanning 230–396 is the Hflx-type G domain; it reads PTFALIGYTN…LMTEIIQEKS (167 aa). GTP is bound by residues 236 to 243, 261 to 265, 283 to 286, 349 to 352, and 374 to 376; these read GYTNSGKS, FATLD, DTVG, NKVD, and SAK. Positions 243 and 263 each coordinate Mg(2+).

This sequence belongs to the TRAFAC class OBG-HflX-like GTPase superfamily. HflX GTPase family. As to quaternary structure, monomer. Associates with the 50S ribosomal subunit. Mg(2+) is required as a cofactor.

It localises to the cytoplasm. Its function is as follows. GTPase that associates with the 50S ribosomal subunit and may have a role during protein synthesis or ribosome biogenesis. Specific for GTP. This is GTPase HflX from Chlamydia pneumoniae (Chlamydophila pneumoniae).